A 534-amino-acid polypeptide reads, in one-letter code: Major facilitator-type transporter sor6 (534 aa).

Residues N29 and N36 are each glycosylated (N-linked (GlcNAc...) asparagine). The next 12 helical transmembrane spans lie at 66 to 86 (WFLT…SSAY), 103 to 123 (LFIT…AVWG), 160 to 180 (AMVA…LIVL), 182 to 202 (FLAG…IADL), 209 to 229 (GLAM…GPIV), 241 to 261 (WVQG…VIFV), 318 to 338 (IVLI…MFLG), 354 to 374 (FGGL…GYAI), 395 to 415 (LPPA…FAWT), 424 to 444 (VSIV…LPIV), 456 to 476 (ASVL…FPLF), and 486 to 506 (IHWA…FPFF).

Belongs to the major facilitator superfamily. Sugar transporter (TC 2.A.1.1) family.

It localises to the membrane. Its function is as follows. Major facilitator-type transporter; part of the gene cluster that mediates the biosynthesis of sorbicillinoids, a diverse group of yellow secondary metabolites that restrict growth of competing pathogenic fungi but not of bacteria. This Hypocrea jecorina (strain QM6a) (Trichoderma reesei) protein is Major facilitator-type transporter sor6.